The following is a 395-amino-acid chain: MPKKKPTPIQLNPNPEGTAVNGTPTAETNLEALQKKLEELELDEQQRKRLEAFLTQKQKVGELKDDDFEKVSELGAGNGGVVFKVSHKPTSLIMARKLIHLEIKPAIRNQIIRELQVLHECNSPYIVGFYGAFYSDGEISICMEHMDGGSLDQVLKKAGKIPEKILGKVSIAVIKGLTYLREKHKIMHRDVKPSNILVNSRGEIKLCDFGVSGQLIDSMANSFVGTRSYMSPERLQGTHYSVQSDIWSMGLSLVEMAIGRYPIPPPDAKELELIFGCSVERDPASSELAPRPRPPGRPISSYGPDSRPPMAIFELLDYIVNEPPPKLPSGVFGAEFQDFVNKCLVKNPAERADLKQLMVHSFIKQSELEEVDFAGWLCSTMGLKQPSTPTHAAGV.

The interval 1 to 24 (MPKKKPTPIQLNPNPEGTAVNGTP) is disordered. The span at 9–24 (IQLNPNPEGTAVNGTP) shows a compositional bias: polar residues. Positions 68 to 363 (FEKVSELGAG…LKQLMVHSFI (296 aa)) constitute a Protein kinase domain. ATP is bound by residues 74–82 (LGAGNGGVV) and lysine 97. The active-site Proton acceptor is the aspartate 190. Phosphoserine; by RAF occurs at positions 218 and 222. The disordered stretch occupies residues 284–305 (ASSELAPRPRPPGRPISSYGPD).

Belongs to the protein kinase superfamily. STE Ser/Thr protein kinase family. MAP kinase kinase subfamily. In terms of processing, activated by phosphorylation on Ser/Thr catalyzed by MAP kinase kinase kinases (RAF or MOS). Expressed in the central nervous system, kidney, liver, intestine and the hematopoietic system.

It localises to the cytoplasm. Its subcellular location is the cytoskeleton. The protein resides in the microtubule organizing center. The protein localises to the centrosome. It is found in the spindle pole body. It localises to the nucleus. The catalysed reaction is L-seryl-[protein] + ATP = O-phospho-L-seryl-[protein] + ADP + H(+). It catalyses the reaction L-threonyl-[protein] + ATP = O-phospho-L-threonyl-[protein] + ADP + H(+). It carries out the reaction L-tyrosyl-[protein] + ATP = O-phospho-L-tyrosyl-[protein] + ADP + H(+). Its function is as follows. Dual specificity protein kinase which acts as an essential component of the MAP kinase signal transduction pathway. Binding of extracellular ligands such as growth factors, cytokines and hormones to their cell-surface receptors activates the MAPK/ERK cascade, ultimately leading to phosphorylation of a threonine and a tyrosine residue in a Thr-Glu-Tyr sequence located in MAP kinases. Depending on the cellular context, this pathway mediates diverse biological functions such as cell growth, adhesion, survival and differentiation predominantly through the regulation of transcription, metabolism and cytoskeletal rearrangements. The sequence is that of Dual specificity mitogen-activated protein kinase kinase 1 (map2k1) from Xenopus laevis (African clawed frog).